The following is a 67-amino-acid chain: Ferredoxin FdxE (67 aa).

Residues cysteine 10, valine 11, glutamine 15, cysteine 16, and cysteine 54 each contribute to the [3Fe-4S] cluster site.

In terms of assembly, interacts with the cytochrome P450 143 with high affinity (Kd=84 nM). The cofactor is [3Fe-4S] cluster.

In terms of biological role, ferredoxin that is the redox partner of cytochrome CYP143, a cytochrome P450 encoded by an adjacent gene. This chain is Ferredoxin FdxE, found in Mycobacterium tuberculosis (strain ATCC 25618 / H37Rv).